The primary structure comprises 555 residues: Glutamine--tRNA ligase (555 aa).

Positions 34 to 44 (PEPNGYLHIGH) match the 'HIGH' region motif. ATP-binding positions include 35-37 (EPN) and 41-47 (HIGHAKS). Residues Asp67 and Tyr212 each contribute to the L-glutamine site. ATP-binding positions include Thr231, 261–262 (RL), and 269–271 (MSK). The 'KMSKS' region signature appears at 268–272 (VMSKR). Positions 317–324 (TKQDNTIE) are interaction with tRNA.

This sequence belongs to the class-I aminoacyl-tRNA synthetase family. Monomer.

It is found in the cytoplasm. The catalysed reaction is tRNA(Gln) + L-glutamine + ATP = L-glutaminyl-tRNA(Gln) + AMP + diphosphate. The polypeptide is Glutamine--tRNA ligase (Enterobacter sp. (strain 638)).